Reading from the N-terminus, the 545-residue chain is Glucose-6-phosphate isomerase (545 aa).

Catalysis depends on glutamate 351, which acts as the Proton donor. Active-site residues include histidine 382 and lysine 510.

It belongs to the GPI family.

Its subcellular location is the cytoplasm. The enzyme catalyses alpha-D-glucose 6-phosphate = beta-D-fructose 6-phosphate. Its pathway is carbohydrate biosynthesis; gluconeogenesis. It functions in the pathway carbohydrate degradation; glycolysis; D-glyceraldehyde 3-phosphate and glycerone phosphate from D-glucose: step 2/4. Functionally, catalyzes the reversible isomerization of glucose-6-phosphate to fructose-6-phosphate. In Shewanella baltica (strain OS223), this protein is Glucose-6-phosphate isomerase.